Reading from the N-terminus, the 301-residue chain is Troponin T, cardiac muscle (301 aa).

2 stretches are compositionally biased toward acidic residues: residues 1 to 42 (MSDL…EEEA) and 50 to 74 (AETEETQAEEDGQEEEDKEDEDGPV). Disordered stretches follow at residues 1 to 99 (MSDL…GERV) and 125 to 223 (ENRK…KKKK). Serine 2 is subject to N-acetylserine. Serine 2 is modified (phosphoserine; by CK2). Pro residues predominate over residues 82–93 (RPFMPNLVPPKI). Composition is skewed to basic and acidic residues over residues 125-186 (ENRK…DEAR) and 206-223 (QTERKSGKRQTEREKKKK). Threonine 207 carries the phosphothreonine; by PKC/PRKCA modification. Residue serine 211 is modified to Phosphoserine; by PKC/PRKCA. Residue threonine 216 is modified to Phosphothreonine; by PKC/PRKCA and RAF1. Threonine 297 is modified (phosphothreonine; by PKC/PRKCA).

The protein belongs to the troponin T family. Binds with troponins I and C to make the thin-filament regulatory complex, troponin. Phosphorylation at Thr-216 by PRKCA induces significant reduction in myofilament calcium sensitivity and actomyosin ATPase activity. The major isoform in adult heart is CTNT4.

Troponin T is the tropomyosin-binding subunit of troponin, the thin filament regulatory complex which confers calcium-sensitivity to striated muscle actomyosin ATPase activity. In Oryctolagus cuniculus (Rabbit), this protein is Troponin T, cardiac muscle (TNNT2).